A 630-amino-acid chain; its full sequence is Arginine--tRNA ligase (630 aa).

The 'HIGH' region motif lies at 120–130 (ANPVHPLHIGH).

It belongs to the class-I aminoacyl-tRNA synthetase family.

It localises to the cytoplasm. It catalyses the reaction tRNA(Arg) + L-arginine + ATP = L-arginyl-tRNA(Arg) + AMP + diphosphate. The polypeptide is Arginine--tRNA ligase (Pyrobaculum aerophilum (strain ATCC 51768 / DSM 7523 / JCM 9630 / CIP 104966 / NBRC 100827 / IM2)).